An 836-amino-acid polypeptide reads, in one-letter code: Translation initiation factor IF-2 (836 aa).

A disordered region spans residues 1–234; it reads MSDTDGKKPL…SLAAMKRKQE (234 aa). Residues 18–27 are compositionally biased toward polar residues; the sequence is SGQVKQSFSH. Residues 50 to 60 show a composition bias toward low complexity; that stretch reads SGSSTTTSSPS. The span at 88 to 156 shows a compositional bias: basic and acidic residues; sequence KLREVEDAKR…ATRRAEEAKR (69 aa). Positions 167 to 176 are enriched in low complexity; it reads PAESRASAPP. Residues 185–206 are compositionally biased toward basic and acidic residues; the sequence is SRKEREREADRDRTTKKDDSRR. Residues 333–501 form the tr-type G domain; it reads PRPPIITIMG…NIALQAEILD (169 aa). A G1 region spans residues 342–349; that stretch reads GHVDHGKT. Position 342–349 (342–349) interacts with GTP; sequence GHVDHGKT. Positions 367–371 are G2; it reads GITQH. The tract at residues 389-392 is G3; it reads DTPG. Residues 389–393 and 443–446 each bind GTP; these read DTPGH and NKID. A G4 region spans residues 443 to 446; that stretch reads NKID. The G5 stretch occupies residues 479 to 481; the sequence is SAK.

Belongs to the TRAFAC class translation factor GTPase superfamily. Classic translation factor GTPase family. IF-2 subfamily.

The protein resides in the cytoplasm. One of the essential components for the initiation of protein synthesis. Protects formylmethionyl-tRNA from spontaneous hydrolysis and promotes its binding to the 30S ribosomal subunits. Also involved in the hydrolysis of GTP during the formation of the 70S ribosomal complex. In Cereibacter sphaeroides (strain ATCC 17029 / ATH 2.4.9) (Rhodobacter sphaeroides), this protein is Translation initiation factor IF-2.